The sequence spans 356 residues: Malate dehydrogenase, glyoxysomal (356 aa).

The transit peptide at 1–36 (MQPIPDVNQRIARISAHLHPPKYQMEESSVLRRANC) directs the protein to the glyoxysome. Residues 51–57 (GAAGGIG) and Asp-77 each bind NAD(+). Substrate contacts are provided by Arg-124 and Arg-130. Residues Asn-137 and 160–162 (ISN) contribute to the NAD(+) site. Asn-162 and Arg-196 together coordinate substrate. His-220 functions as the Proton acceptor in the catalytic mechanism. Position 271 (Met-271) interacts with NAD(+).

The protein belongs to the LDH/MDH superfamily. MDH type 1 family. As to quaternary structure, homodimer.

The protein localises to the glyoxysome. It catalyses the reaction (S)-malate + NAD(+) = oxaloacetate + NADH + H(+). The sequence is that of Malate dehydrogenase, glyoxysomal (MDHG) from Cucumis sativus (Cucumber).